A 198-amino-acid chain; its full sequence is tRNA (pseudouridine(54)-N(1))-methyltransferase (198 aa).

Residues Leu130, Gly153, Leu176 to Leu181, and Cys186 contribute to the S-adenosyl-L-methionine site.

This sequence belongs to the methyltransferase superfamily. TrmY family. As to quaternary structure, homodimer.

The protein resides in the cytoplasm. It catalyses the reaction pseudouridine(54) in tRNA + S-adenosyl-L-methionine = N(1)-methylpseudouridine(54) in tRNA + S-adenosyl-L-homocysteine + H(+). Functionally, specifically catalyzes the N1-methylation of pseudouridine at position 54 (Psi54) in tRNAs. This Methanococcus maripaludis (strain C6 / ATCC BAA-1332) protein is tRNA (pseudouridine(54)-N(1))-methyltransferase.